The following is a 173-amino-acid chain: Protein sym1 (173 aa).

4 consecutive transmembrane segments (helical) span residues 12-32 (QPIL…DVLA), 52-72 (MALY…GFLQ), 129-149 (ANLT…PLEY), and 151-171 (VLVV…INSG).

Belongs to the peroxisomal membrane protein PXMP2/4 family.

The protein localises to the mitochondrion inner membrane. May be involved in cellular response to stress. Required to maintain mitochondrial DNA (mtDNA) integrity and stability. The chain is Protein sym1 (sym1) from Aspergillus oryzae (strain ATCC 42149 / RIB 40) (Yellow koji mold).